A 137-amino-acid chain; its full sequence is Large-conductance mechanosensitive channel (137 aa).

2 helical membrane passes run 9–29 (AFAV…GAAF) and 79–99 (IQTI…VKAI).

It belongs to the MscL family. In terms of assembly, homopentamer.

It is found in the cell inner membrane. Channel that opens in response to stretch forces in the membrane lipid bilayer. May participate in the regulation of osmotic pressure changes within the cell. This Pseudomonas paraeruginosa (strain DSM 24068 / PA7) (Pseudomonas aeruginosa (strain PA7)) protein is Large-conductance mechanosensitive channel.